Reading from the N-terminus, the 288-residue chain is MKDRTQELRTAKDSDDDDDVAVTVDRDRFMDEFFEQVEEIRGFIDKIAENVEEVKRKHSAILASPNPDEKTKEELEELMSDIKKTANKVRSKLKSIEQSIEQEEGLNRSSADLRIRKTQHSTLSRKFVEVMSEYNATQSDYRERCKGRIQRQLEITGRTTTSEELEDMLESGNPAIFASGIIMDSSISKQALSEIETRHSEIIKLENSIRELHDMFMDMAMLVESQGEMIDRIEYNVEHAVDYVERAVSDTKKAVKYQSKARRKKIMIIICCVILGIVIASTVGGIFA.

Over Met-1–Lys-265 the chain is Cytoplasmic. Phosphoserine is present on residues Ser-14, Ser-64, and Ser-95. Residues Asp-68–Ser-109 are a coiled coil. Residue Ser-188 is modified to Phosphoserine; by DAPK1. Residues Leu-192–Ala-254 form the t-SNARE coiled-coil homology domain. Residues Lys-252, Lys-253, and Lys-256 each participate in a glycyl lysine isopeptide (Lys-Gly) (interchain with G-Cter in SUMO) cross-link. The helical; Anchor for type IV membrane protein transmembrane segment at Ile-266–Ile-286 threads the bilayer. The Extracellular portion of the chain corresponds to Phe-287–Ala-288.

Belongs to the syntaxin family. As to quaternary structure, part of the SNARE core complex containing SNAP25, VAMP2 and STX1A; this complex constitutes the basic catalytic machinery of the complex neurotransmitter release apparatus. The SNARE complex interacts with CPLX1. Interacts with STXBP1. The interaction with STXBP1 promotes assembly of the SNARE complex. Interacts (via C-terminus) with KCNB1 (via C-terminus); the interaction increases in a calcium-dependent manner and induces a pore-independent enhancement of exocytosis in neuroendocrine cells, chromaffin cells, pancreatic beta cells and from the soma of dorsal root ganglia (DRG) neurons. Interacts with SYTL4. Interacts with STXBP6. Interacts with PLCL1 (via C2 domain). Interacts with OTOF. Interacts with LGI3. Interacts (via the H3 domain) with SLC6A4 (via the N-terminus); this interaction regulates SLC4A6 channel conductance in thalamocortical neurons. Interacts with SYT6 and SYT8; the interaction is Ca(2+)-dependent. Interacts with VAMP8. Interacts with SNAP23. Interacts with VAPA and SYBU. Interacts with PRRT2. Interacts with SEPT8. Interacts with STXBP5L. Interacts with synaptotagmin-1/SYT1. Interacts with SEPTIN5; in the cerebellar cortex. Interacts with SEPTIN4; in the striatum. Post-translationally, phosphorylated by CK2. Phosphorylation at Ser-188 by DAPK1 significantly decreases its interaction with STXBP1. Sumoylated, sumoylation is required for regulation of synaptic vesicle endocytosis. Highly expressed in embryonic spinal cord and ganglia and in adult cerebellum and cerebral cortex. In terms of tissue distribution, expressed in heart, liver, fat, skeletal muscle, kidney and brain.

The protein resides in the cytoplasmic vesicle. It is found in the secretory vesicle. Its subcellular location is the synaptic vesicle membrane. It localises to the synapse. The protein localises to the synaptosome. The protein resides in the cell membrane. It is found in the secreted. Plays an essential role in hormone and neurotransmitter calcium-dependent exocytosis and endocytosis. Part of the SNARE (Soluble NSF Attachment Receptor) complex composed of SNAP25, STX1A and VAMP2 which mediates the fusion of synaptic vesicles with the presynaptic plasma membrane. STX1A and SNAP25 are localized on the plasma membrane while VAMP2 resides in synaptic vesicles. The pairing of the three SNAREs from the N-terminal SNARE motifs to the C-terminal anchors leads to the formation of the SNARE complex, which brings membranes into close proximity and results in final fusion. Participates in the calcium-dependent regulation of acrosomal exocytosis in sperm. Also plays an important role in the exocytosis of hormones such as insulin or glucagon-like peptide 1 (GLP-1). This chain is Syntaxin-1A (STX1A), found in Homo sapiens (Human).